A 211-amino-acid polypeptide reads, in one-letter code: Methylthioribulose-1-phosphate dehydratase (211 aa).

The Zn(2+) site is built by His97 and His99.

It belongs to the aldolase class II family. MtnB subfamily. In terms of assembly, homotetramer. Zn(2+) serves as cofactor.

It catalyses the reaction 5-(methylsulfanyl)-D-ribulose 1-phosphate = 5-methylsulfanyl-2,3-dioxopentyl phosphate + H2O. It functions in the pathway amino-acid biosynthesis; L-methionine biosynthesis via salvage pathway; L-methionine from S-methyl-5-thio-alpha-D-ribose 1-phosphate: step 2/6. In terms of biological role, catalyzes the dehydration of methylthioribulose-1-phosphate (MTRu-1-P) into 2,3-diketo-5-methylthiopentyl-1-phosphate (DK-MTP-1-P). The sequence is that of Methylthioribulose-1-phosphate dehydratase from Geobacillus thermodenitrificans (strain NG80-2).